The sequence spans 433 residues: Mblk-1-related factor 1 (433 aa).

The HTH psq-type 1 domain occupies 145-197; that stretch reads NKSNILRRNYTVEDLTQAVEDIRQGKLGTRRASVVYGIPRSTLRNKIYKLEAE. The segment at residues 173–193 is a DNA-binding region (H-T-H motif); that stretch reads TRRASVVYGIPRSTLRNKIYK. Positions 235 to 254 are enriched in low complexity; that stretch reads GNQSDSSSSSPHASMCPSSP. 2 disordered regions span residues 235 to 278 and 304 to 338; these read GNQS…SCSP and ANIS…PKRG. The span at 304 to 319 shows a compositional bias: polar residues; the sequence is ANISNVDTHTPTPISE. A compositionally biased stretch (basic and acidic residues) spans 320–332; the sequence is KSQKMHGNEEWKR. Residues 334-386 form the HTH psq-type 2 domain; the sequence is RPKRGQYRKYDKNALDEAVRSVRRGEMTVHRAGSFFGVPHSTLEYKVKERNLM. Residues 362-382 constitute a DNA-binding region (H-T-H motif); sequence VHRAGSFFGVPHSTLEYKVKE. A disordered region spans residues 393–433; the sequence is LYSHDSSTSEDGSQLVTSTISEKSDSSSHTSTPIPFPISLV. Polar residues predominate over residues 396-408; the sequence is HDSSTSEDGSQLV. Residues 409–424 are compositionally biased toward low complexity; sequence TSTISEKSDSSSHTST.

Expressed in AIM, RIC, AIZ, ADF, ADL, ASK, AWA, AUA, AIN, RIH (or RIR) and RIF head neurons and, in PVP, PVQ and DVA (or DVC) tail neurons, some intestinal cells, somatic gonad and vulva.

It localises to the nucleus. In terms of biological role, may act as transcription activator. Plays a role in neurogenesis by regulating neurite pruning between left and right AIM neurons and left and right RIF neurons during larval development. Regulates olfactory plasticity. The protein is Mblk-1-related factor 1 of Caenorhabditis elegans.